A 298-amino-acid polypeptide reads, in one-letter code: Thymidylate synthase (298 aa).

DUMP is bound by residues Arg-25 and 159–160; that span reads RR. Cys-179 serves as the catalytic Nucleophile. Residues 200-203, Asn-211, and 241-243 each bind dUMP; these read RSVD and HLY. A (6R)-5,10-methylene-5,6,7,8-tetrahydrofolate-binding site is contributed by Asp-203. Residue Ala-297 participates in (6R)-5,10-methylene-5,6,7,8-tetrahydrofolate binding.

It belongs to the thymidylate synthase family. Bacterial-type ThyA subfamily. As to quaternary structure, homodimer.

The protein localises to the cytoplasm. It catalyses the reaction dUMP + (6R)-5,10-methylene-5,6,7,8-tetrahydrofolate = 7,8-dihydrofolate + dTMP. It functions in the pathway pyrimidine metabolism; dTTP biosynthesis. Catalyzes the reductive methylation of 2'-deoxyuridine-5'-monophosphate (dUMP) to 2'-deoxythymidine-5'-monophosphate (dTMP) while utilizing 5,10-methylenetetrahydrofolate (mTHF) as the methyl donor and reductant in the reaction, yielding dihydrofolate (DHF) as a by-product. This enzymatic reaction provides an intracellular de novo source of dTMP, an essential precursor for DNA biosynthesis. The chain is Thymidylate synthase from Cereibacter sphaeroides (strain ATCC 17029 / ATH 2.4.9) (Rhodobacter sphaeroides).